The following is a 411-amino-acid chain: MKAARFVLRSAGSLNGAGLVPREVEHFSRYSPSPLSMKQLLDFGSENACERTSFAFLRQELPVRLANILKEIDILPTQLVNTSSVQLVKSWYIQSLMDLVEFHEKSPDDQKALSDFVDTLIKVRNRHHNVVPTMAQGIIEYKDACTVDPVTNQNLQYFLDRFYMNRISTRMLMNQHILIFSDSQTGNPSHIGSIDPNCDVVAVVQDAFECSRMLCDQYYLSSPELKLTQVNGKFPDQPIHIVYVPSHLHHMLFELFKNAMRATVEHQENQPSLTPIEVIVVLGKEDLTIKISDRGGGVPLRIIDRLFSYTYSTAPTPVMDNSRNAPLAGFGYGLPISRLYAKYFQGDLNLYSLSGYGTDAIIYLKALSSESIEKLPVFNKSAFKHYQMSSEADDWCIPSREPKNLAKEVAM.

The 231-residue stretch at 138–368 (IIEYKDACTV…DAIIYLKALS (231 aa)) folds into the Histidine kinase domain. Residues 254–261 (ELFKNAMR), aspartate 293, 312–313 (ST), and 329–334 (GFGYGL) each bind ATP.

The protein belongs to the PDK/BCKDK protein kinase family. In terms of assembly, homodimer. Interacts with the pyruvate dehydrogenase complex subunit DLAT, and is part of the multimeric pyruvate dehydrogenase complex that contains multiple copies of pyruvate dehydrogenase (E1), dihydrolipoamide acetyltransferase (DLAT, E2) and lipoamide dehydrogenase (DLD, E3). As to expression, ubiquitous; highest levels of expression in heart and skeletal muscle.

The protein resides in the mitochondrion matrix. The catalysed reaction is L-seryl-[pyruvate dehydrogenase E1 alpha subunit] + ATP = O-phospho-L-seryl-[pyruvate dehydrogenase E1 alpha subunit] + ADP + H(+). Its function is as follows. Kinase that plays a key role in regulation of glucose and fatty acid metabolism and homeostasis via phosphorylation of the pyruvate dehydrogenase subunits PDHA1 and PDHA2. This inhibits pyruvate dehydrogenase activity, and thereby regulates metabolite flux through the tricarboxylic acid cycle, down-regulates aerobic respiration and inhibits the formation of acetyl-coenzyme A from pyruvate. Inhibition of pyruvate dehydrogenase decreases glucose utilization and increases fat metabolism in response to prolonged fasting and starvation. Plays an important role in maintaining normal blood glucose levels under starvation, and is involved in the insulin signaling cascade. Via its regulation of pyruvate dehydrogenase activity, plays an important role in maintaining normal blood pH and in preventing the accumulation of ketone bodies under starvation. In the fed state, mediates cellular responses to glucose levels and to a high-fat diet. Regulates both fatty acid oxidation and de novo fatty acid biosynthesis. Plays a role in the generation of reactive oxygen species. Protects detached epithelial cells against anoikis. Plays a role in cell proliferation via its role in regulating carbohydrate and fatty acid metabolism. This chain is [Pyruvate dehydrogenase (acetyl-transferring)] kinase isozyme 4, mitochondrial (PDK4), found in Homo sapiens (Human).